The sequence spans 303 residues: N-acetylmuramic acid 6-phosphate etherase (303 aa).

The tract at residues 1–21 (MQPSQLRSLTTESRNPNTMGI) is disordered. The region spanning 58–221 (AYDSISNGGR…STSVMIRQGK (164 aa)) is the SIS domain. Glu86 serves as the catalytic Proton donor. Glu117 is a catalytic residue.

Belongs to the GCKR-like family. MurNAc-6-P etherase subfamily. Homodimer.

It catalyses the reaction N-acetyl-D-muramate 6-phosphate + H2O = N-acetyl-D-glucosamine 6-phosphate + (R)-lactate. Its pathway is amino-sugar metabolism; N-acetylmuramate degradation. Specifically catalyzes the cleavage of the D-lactyl ether substituent of MurNAc 6-phosphate, producing GlcNAc 6-phosphate and D-lactate. The polypeptide is N-acetylmuramic acid 6-phosphate etherase (Bacillus pumilus (strain SAFR-032)).